A 158-amino-acid chain; its full sequence is SH3 domain-binding glutamic acid-rich protein homolog (158 aa).

Positions 40-51 (TEPGKESEKELM) are enriched in basic and acidic residues. The tract at residues 40–74 (TEPGKESEKELMQNKSTSNGGTVSDPEPRHPLPPQ) is disordered. The segment covering 52-61 (QNKSTSNGGT) has biased composition (polar residues). The SH3-binding motif lies at 67–73 (PRHPLPP). Thr-109 is modified (phosphothreonine). A disordered region spans residues 118-158 (LKQENGDAKKEEAETEAEDKKTEAGDGDVDVKEEAAEKAEV).

The protein belongs to the SH3BGR family.

In Drosophila melanogaster (Fruit fly), this protein is SH3 domain-binding glutamic acid-rich protein homolog (Sh3beta).